The sequence spans 928 residues: G-protein coupled receptor family C group 6 member A (928 aa).

The signal sequence occupies residues 1–20; the sequence is MALSFVFITCFMILLDTSQS. Residues 21–594 are Extracellular-facing; sequence CHTPDDFVAI…EYLDWDDSLA (574 aa). Asparagine 332 and asparagine 555 each carry an N-linked (GlcNAc...) asparagine glycan. A helical membrane pass occupies residues 595–615; sequence LLLIALSLLGIAFVLAVGIIF. Over 616–630 the chain is Cytoplasmic; it reads TRNLKTPVVKSSGGL. The chain crosses the membrane as a helical span at residues 631 to 651; sequence VVCYVMLACHALNFASTGFFI. The Extracellular segment spans residues 652 to 669; that stretch reads GEPQDFTCKTRQTLFGVS. A helical transmembrane segment spans residues 670–690; sequence FTLCVSCILTKSLKILLAFSF. Over 691 to 706 the chain is Cytoplasmic; that stretch reads DPTLKTFLKCLYRPVP. The chain crosses the membrane as a helical span at residues 707–727; it reads IVLTCTGIQVVICTLWLVLAA. The Extracellular portion of the chain corresponds to 728 to 750; the sequence is PTVEENTSLPRVIILECEEGSAL. A helical transmembrane segment spans residues 751–771; sequence AFGTMLGYIAVLAFICFVFAF. Topologically, residues 772–784 are cytoplasmic; the sequence is KGRKLPENYNEAK. Residues 785-805 form a helical membrane-spanning segment; sequence FLTFGMLIYFIAWITFIPVYA. Residues 806-812 lie on the Extracellular side of the membrane; it reads TTFGKYL. The helical transmembrane segment at 813–833 threads the bilayer; it reads PAVEIIVILISNYGILCCTFF. The Cytoplasmic segment spans residues 834–928; sequence PKCYIILCKQ…TLHQKRSSSI (95 aa).

It belongs to the G-protein coupled receptor 3 family. Homodimer; disulfide-linked. Post-translationally, N-glycosylated. High expression in soft palate. Weak expression in kidney, liver, lung and brain. No expression detected in heart, testis, skeletal muscle amd spleen.

The protein resides in the cell membrane. Functionally, receptor activated by multiple ligands, including osteocalcin (BGLAP), basic amino acids, and various cations. Activated by amino acids with a preference for basic amino acids such as L-Lys, L-Arg and L-ornithine but also by small and polar amino acids. The L-alpha amino acids respond is augmented by divalent cations Ca(2+) and Mg(2+). Seems to act through a G(q)/G(11) and G(i)-coupled pathway. Regulates testosterone production by acting as a ligand for uncarboxylated osteocalcin hormone: osteocalcin-binding at the surface of Leydig cells initiates a signaling response that promotes the expression of enzymes required for testosterone synthesis in a CREB-dependent manner. Mediates the non-genomic effects of androgens in multiple tissue. May coordinate nutritional and hormonal anabolic signals through the sensing of extracellular amino acids, osteocalcin, divalent ions and its responsiveness to anabolic steroids. The protein is G-protein coupled receptor family C group 6 member A (Gprc6a) of Rattus norvegicus (Rat).